A 37-amino-acid chain; its full sequence is Large ribosomal subunit protein bL36c (37 aa).

It belongs to the bacterial ribosomal protein bL36 family.

Its subcellular location is the plastid. It localises to the chloroplast. The protein is Large ribosomal subunit protein bL36c of Pelargonium hortorum (Common geranium).